The primary structure comprises 177 residues: MQNACTLNKKSSYSYDDLLASGRGELFGKEGPQLPAPTMLMMDRIIEMNEETGAFGKGYIEAELDIKPELPFFGCHFIGDPVMPGCLGLDAMWQLVGFYLGWIGGKGKGRALGVGEVKFTGQILPTAKKVVYRIHMKRVINRKLVMGMADGEVEVDGRVIYTATDLKVGLFQDTSTF.

Histidine 76 is a catalytic residue.

It belongs to the thioester dehydratase family. FabA subfamily. Homodimer.

It is found in the cytoplasm. The catalysed reaction is a (3R)-hydroxyacyl-[ACP] = a (2E)-enoyl-[ACP] + H2O. The enzyme catalyses (3R)-hydroxydecanoyl-[ACP] = (2E)-decenoyl-[ACP] + H2O. It carries out the reaction (2E)-decenoyl-[ACP] = (3Z)-decenoyl-[ACP]. The protein operates within lipid metabolism; fatty acid biosynthesis. Functionally, necessary for the introduction of cis unsaturation into fatty acids. Catalyzes the dehydration of (3R)-3-hydroxydecanoyl-ACP to E-(2)-decenoyl-ACP and then its isomerization to Z-(3)-decenoyl-ACP. Can catalyze the dehydratase reaction for beta-hydroxyacyl-ACPs with saturated chain lengths up to 16:0, being most active on intermediate chain length. This is 3-hydroxydecanoyl-[acyl-carrier-protein] dehydratase from Haemophilus influenzae (strain PittGG).